The sequence spans 108 residues: Phosphoribosyl-AMP cyclohydrolase (108 aa).

D78 provides a ligand contact to Mg(2+). C79 contacts Zn(2+). Residues D80 and D82 each contribute to the Mg(2+) site. The Zn(2+) site is built by C95 and C102.

Belongs to the PRA-CH family. In terms of assembly, homodimer. It depends on Mg(2+) as a cofactor. Zn(2+) is required as a cofactor.

It localises to the cytoplasm. The enzyme catalyses 1-(5-phospho-beta-D-ribosyl)-5'-AMP + H2O = 1-(5-phospho-beta-D-ribosyl)-5-[(5-phospho-beta-D-ribosylamino)methylideneamino]imidazole-4-carboxamide. The protein operates within amino-acid biosynthesis; L-histidine biosynthesis; L-histidine from 5-phospho-alpha-D-ribose 1-diphosphate: step 3/9. Its function is as follows. Catalyzes the hydrolysis of the adenine ring of phosphoribosyl-AMP. The sequence is that of Phosphoribosyl-AMP cyclohydrolase from Nitrosopumilus maritimus (strain SCM1).